A 283-amino-acid chain; its full sequence is Elongation factor Ts (283 aa).

Residues 79–82 are involved in Mg(2+) ion dislocation from EF-Tu; the sequence is TDFV.

This sequence belongs to the EF-Ts family.

It localises to the cytoplasm. Functionally, associates with the EF-Tu.GDP complex and induces the exchange of GDP to GTP. It remains bound to the aminoacyl-tRNA.EF-Tu.GTP complex up to the GTP hydrolysis stage on the ribosome. This Shewanella frigidimarina (strain NCIMB 400) protein is Elongation factor Ts.